The primary structure comprises 161 residues: Endoribonuclease YbeY (161 aa).

Zn(2+) is bound by residues His-121, His-125, and His-131.

The protein belongs to the endoribonuclease YbeY family. It depends on Zn(2+) as a cofactor.

The protein resides in the cytoplasm. Functionally, single strand-specific metallo-endoribonuclease involved in late-stage 70S ribosome quality control and in maturation of the 3' terminus of the 16S rRNA. This is Endoribonuclease YbeY from Xylella fastidiosa (strain M23).